Consider the following 381-residue polypeptide: L-lactate dehydrogenase (381 aa).

The region spanning 1–380 is the FMN hydroxy acid dehydrogenase domain; that stretch reads MIISASTDYR…NRDSLAVSER (380 aa). Tyrosine 24 is a binding site for substrate. Serine 106 and glutamine 127 together coordinate FMN. Position 129 (tyrosine 129) interacts with substrate. FMN is bound at residue threonine 155. Arginine 164 contributes to the substrate binding site. Lysine 251 is a binding site for FMN. Histidine 275 acts as the Proton acceptor in catalysis. Arginine 278 is a binding site for substrate. Residue 306 to 330 participates in FMN binding; the sequence is DSGIRTGLDVVRMIALGADSVLLGR.

The protein belongs to the FMN-dependent alpha-hydroxy acid dehydrogenase family. The cofactor is FMN.

It is found in the cell inner membrane. It catalyses the reaction (S)-lactate + A = pyruvate + AH2. Functionally, catalyzes the conversion of L-lactate to pyruvate. Is coupled to the respiratory chain. The chain is L-lactate dehydrogenase from Yersinia pseudotuberculosis serotype O:1b (strain IP 31758).